Consider the following 673-residue polypeptide: Bifunctional lycopene cyclase/phytoene synthase (673 aa).

The tract at residues 1-251 is lycopene beta-cyclase; the sequence is MTALAYYQIH…IVLGLSACDH (251 aa). 7 helical membrane-spanning segments follow: residues 9-29, 36-56, 81-101, 117-137, 157-177, 187-207, and 226-246; these read IHLI…SPIL, KISI…SWII, YEEY…YVLA, SALS…LFTA, LSLL…EYAF, TIAA…VAVG, and VLPI…VLGL. The phytoene synthase stretch occupies residues 258 to 673; that stretch reads LHGRTIYGNK…SVVMSGWEGQ (416 aa). Positions 376–399 are disordered; sequence KILSSPLLPPSHPSRPTGMYPLPP.

In the N-terminal section; belongs to the lycopene beta-cyclase family. The protein in the C-terminal section; belongs to the phytoene/squalene synthase family.

It localises to the membrane. The catalysed reaction is all-trans-lycopene = gamma-carotene. It carries out the reaction gamma-carotene = all-trans-beta-carotene. It catalyses the reaction 2 (2E,6E,10E)-geranylgeranyl diphosphate = 15-cis-phytoene + 2 diphosphate. It participates in carotenoid biosynthesis; beta-carotene biosynthesis. Its pathway is carotenoid biosynthesis; phytoene biosynthesis; all-trans-phytoene from geranylgeranyl diphosphate: step 1/1. In terms of biological role, bifunctional enzyme that catalyzes the reactions from geranylgeranyl diphosphate to phytoene (phytoene synthase) and lycopene to beta-carotene via the intermediate gamma-carotene (lycopene cyclase). The cyclase preferentially catalyzes the symmetric cyclization of both ends of the substrate to produce dicyclic carotenoids. Beta-carotene is further processed to the acidic carotenoid astaxanthin. The polypeptide is Bifunctional lycopene cyclase/phytoene synthase (Phaffia rhodozyma (Yeast)).